Consider the following 709-residue polypeptide: Translation initiation factor IF-2 (709 aa).

Composition is skewed to basic and acidic residues over residues 47–70 (DHQY…EKPK) and 105–121 (KGKE…EKKL). A disordered region spans residues 47-157 (DHQYRPNTGK…QPAKKEKELP (111 aa)). A compositionally biased stretch (basic residues) spans 125–137 (AKKKGKGPAKGKK). Residues 138–149 (QAAPAAKQAPQP) are compositionally biased toward low complexity. The tr-type G domain maps to 240–409 (ERPPVVTIMG…LLVSEMEELK (170 aa)). The interval 249–256 (GHVDHGKT) is G1. Residue 249–256 (GHVDHGKT) participates in GTP binding. Residues 274-278 (GITQH) form a G2 region. A G3 region spans residues 295-298 (DTPG). GTP contacts are provided by residues 295 to 299 (DTPGH) and 349 to 352 (NKID). A G4 region spans residues 349-352 (NKID). The interval 385–387 (SAK) is G5.

It belongs to the TRAFAC class translation factor GTPase superfamily. Classic translation factor GTPase family. IF-2 subfamily.

The protein localises to the cytoplasm. Functionally, one of the essential components for the initiation of protein synthesis. Protects formylmethionyl-tRNA from spontaneous hydrolysis and promotes its binding to the 30S ribosomal subunits. Also involved in the hydrolysis of GTP during the formation of the 70S ribosomal complex. This Geobacillus kaustophilus (strain HTA426) protein is Translation initiation factor IF-2.